We begin with the raw amino-acid sequence, 67 residues long: uncharacterized protein (67 aa).

The protein belongs to the baculoviridae 8 kDa protein family.

This is an uncharacterized protein from Autographa californica nuclear polyhedrosis virus (AcMNPV).